Reading from the N-terminus, the 353-residue chain is DNA-directed RNA polymerase subunit alpha (353 aa).

The tract at residues 1-226 (MLISQRPTLT…ELFGLARELN (226 aa)) is alpha N-terminal domain (alpha-NTD). The segment at 241–353 (ADHIASFGLP…TEDYAETEQL (113 aa)) is alpha C-terminal domain (alpha-CTD). Residues 326 to 353 (ATGTWSDTDAGSFGDAEGTEDYAETEQL) are disordered. A compositionally biased stretch (acidic residues) spans 342–353 (EGTEDYAETEQL).

This sequence belongs to the RNA polymerase alpha chain family. Homodimer. The RNAP catalytic core consists of 2 alpha, 1 beta, 1 beta' and 1 omega subunit. When a sigma factor is associated with the core the holoenzyme is formed, which can initiate transcription.

The catalysed reaction is RNA(n) + a ribonucleoside 5'-triphosphate = RNA(n+1) + diphosphate. Its function is as follows. DNA-dependent RNA polymerase catalyzes the transcription of DNA into RNA using the four ribonucleoside triphosphates as substrates. This Rhodococcus jostii (strain RHA1) protein is DNA-directed RNA polymerase subunit alpha.